Reading from the N-terminus, the 401-residue chain is S-adenosylmethionine synthase (401 aa).

ATP is bound at residue His-16. Asp-18 is a Mg(2+) binding site. Glu-44 is a binding site for K(+). Residues Glu-57 and Gln-109 each coordinate L-methionine. The tract at residues 109-119 is flexible loop; the sequence is QSAHIAQGVDA. ATP-binding positions include 174-176, Asp-251, 257-258, Ala-274, and Lys-278; these read DAK and RK. Residue Asp-251 coordinates L-methionine. L-methionine is bound at residue Lys-282.

It belongs to the AdoMet synthase family. As to quaternary structure, homotetramer; dimer of dimers. Mg(2+) serves as cofactor. Requires K(+) as cofactor.

It localises to the cytoplasm. It catalyses the reaction L-methionine + ATP + H2O = S-adenosyl-L-methionine + phosphate + diphosphate. Its pathway is amino-acid biosynthesis; S-adenosyl-L-methionine biosynthesis; S-adenosyl-L-methionine from L-methionine: step 1/1. In terms of biological role, catalyzes the formation of S-adenosylmethionine (AdoMet) from methionine and ATP. The overall synthetic reaction is composed of two sequential steps, AdoMet formation and the subsequent tripolyphosphate hydrolysis which occurs prior to release of AdoMet from the enzyme. This chain is S-adenosylmethionine synthase, found in Novosphingobium aromaticivorans (strain ATCC 700278 / DSM 12444 / CCUG 56034 / CIP 105152 / NBRC 16084 / F199).